A 289-amino-acid polypeptide reads, in one-letter code: Bifunctional protein FolD (289 aa).

NADP(+) is bound by residues 165-167 and S190; that span reads GAS.

The protein belongs to the tetrahydrofolate dehydrogenase/cyclohydrolase family. Homodimer.

It catalyses the reaction (6R)-5,10-methylene-5,6,7,8-tetrahydrofolate + NADP(+) = (6R)-5,10-methenyltetrahydrofolate + NADPH. The catalysed reaction is (6R)-5,10-methenyltetrahydrofolate + H2O = (6R)-10-formyltetrahydrofolate + H(+). It functions in the pathway one-carbon metabolism; tetrahydrofolate interconversion. Its function is as follows. Catalyzes the oxidation of 5,10-methylenetetrahydrofolate to 5,10-methenyltetrahydrofolate and then the hydrolysis of 5,10-methenyltetrahydrofolate to 10-formyltetrahydrofolate. The polypeptide is Bifunctional protein FolD (Ralstonia nicotianae (strain ATCC BAA-1114 / GMI1000) (Ralstonia solanacearum)).